Consider the following 126-residue polypeptide: MELTLKTAKRVEIIDITDQVERCVESRDGLVLVYTPHTTTALVINEGERGLLEDILEFMEKLVPYGKGYKHDRLDSNADAHLKATLLGNSVVVPVESGKLALGTWQRILFLEFDGPRTRRVIVKAL.

The protein belongs to the UPF0047 family.

This chain is UPF0047 protein AF_2050, found in Archaeoglobus fulgidus (strain ATCC 49558 / DSM 4304 / JCM 9628 / NBRC 100126 / VC-16).